The following is a 309-amino-acid chain: Methionyl-tRNA formyltransferase (309 aa).

110–113 lines the (6S)-5,6,7,8-tetrahydrofolate pocket; the sequence is SLLP. Residues 289–309 form a disordered region; it reads KRMAATDWARGSRIEQGERLK. Residues 298 to 309 show a composition bias toward basic and acidic residues; the sequence is RGSRIEQGERLK.

It belongs to the Fmt family.

The catalysed reaction is L-methionyl-tRNA(fMet) + (6R)-10-formyltetrahydrofolate = N-formyl-L-methionyl-tRNA(fMet) + (6S)-5,6,7,8-tetrahydrofolate + H(+). Functionally, attaches a formyl group to the free amino group of methionyl-tRNA(fMet). The formyl group appears to play a dual role in the initiator identity of N-formylmethionyl-tRNA by promoting its recognition by IF2 and preventing the misappropriation of this tRNA by the elongation apparatus. The protein is Methionyl-tRNA formyltransferase of Saccharopolyspora erythraea (strain ATCC 11635 / DSM 40517 / JCM 4748 / NBRC 13426 / NCIMB 8594 / NRRL 2338).